A 360-amino-acid chain; its full sequence is Phospho-N-acetylmuramoyl-pentapeptide-transferase (360 aa).

A run of 10 helical transmembrane segments spans residues 26–46 (AVLSLLTALLLSLWIGPKMIL), 73–93 (TMGGIMILATITASSLLWGDL), 94–114 (SNPYIWCSLFVLLGYGAIGFV), 132–152 (WKYFWLSVVAFIAVFTMYMIG), 168–188 (IMPQLGLFYIVLAYFVIVGTS), 199–219 (GLAIMPTVFVAGAFAIIAWAT), 239–259 (LVIFCTAIVGAGLGFLWFNTY), 263–283 (VFMGDVGSLALGGALGVIAVL), 288–308 (FLLVIMGGVFVMETVSVILQV), and 338–358 (VIIRFWIISLMLVLLGLVTLK).

Belongs to the glycosyltransferase 4 family. MraY subfamily. It depends on Mg(2+) as a cofactor.

The protein resides in the cell inner membrane. It carries out the reaction UDP-N-acetyl-alpha-D-muramoyl-L-alanyl-gamma-D-glutamyl-meso-2,6-diaminopimeloyl-D-alanyl-D-alanine + di-trans,octa-cis-undecaprenyl phosphate = di-trans,octa-cis-undecaprenyl diphospho-N-acetyl-alpha-D-muramoyl-L-alanyl-D-glutamyl-meso-2,6-diaminopimeloyl-D-alanyl-D-alanine + UMP. It participates in cell wall biogenesis; peptidoglycan biosynthesis. In terms of biological role, catalyzes the initial step of the lipid cycle reactions in the biosynthesis of the cell wall peptidoglycan: transfers peptidoglycan precursor phospho-MurNAc-pentapeptide from UDP-MurNAc-pentapeptide onto the lipid carrier undecaprenyl phosphate, yielding undecaprenyl-pyrophosphoryl-MurNAc-pentapeptide, known as lipid I. This chain is Phospho-N-acetylmuramoyl-pentapeptide-transferase, found in Actinobacillus succinogenes (strain ATCC 55618 / DSM 22257 / CCUG 43843 / 130Z).